The primary structure comprises 179 residues: Plasmid-derived single-stranded DNA-binding protein (179 aa).

The SSB domain occupies 6–110 (INKVILVGRL…ILVKTTGTMQ (105 aa)). Residues 55–61 (WHRVVLF) mediate DNA binding. The disordered stretch occupies residues 117–179 (GAQTQPEEGQ…DYGFSDDIPF (63 aa)). Residues 118 to 132 (AQTQPEEGQQFSGQP) are compositionally biased toward polar residues. A compositionally biased stretch (basic residues) spans 145-155 (GGAKTKGRGRK). Over residues 167–179 (EGDDYGFSDDIPF) the composition is skewed to acidic residues.

As to quaternary structure, homotetramer.

In terms of biological role, may contribute to the conjugative processing of DNA. It has a functional relationship with Psi (plasmid-mediated sos inhibition) proteins. The sequence is that of Plasmid-derived single-stranded DNA-binding protein (ssbF) from Escherichia coli (strain K12).